A 233-amino-acid polypeptide reads, in one-letter code: Pyridoxine 5'-phosphate synthase (233 aa).

Asparagine 6 contacts 3-amino-2-oxopropyl phosphate. 1-deoxy-D-xylulose 5-phosphate is bound at residue 8–9 (DH). Residue arginine 17 participates in 3-amino-2-oxopropyl phosphate binding. Histidine 42 (proton acceptor) is an active-site residue. 1-deoxy-D-xylulose 5-phosphate-binding residues include arginine 44 and histidine 49. Glutamate 69 serves as the catalytic Proton acceptor. Threonine 99 is a 1-deoxy-D-xylulose 5-phosphate binding site. Histidine 186 functions as the Proton donor in the catalytic mechanism. Residues glycine 187 and 208–209 (GH) each bind 3-amino-2-oxopropyl phosphate.

The protein belongs to the PNP synthase family. Homooctamer; tetramer of dimers.

The protein resides in the cytoplasm. It carries out the reaction 3-amino-2-oxopropyl phosphate + 1-deoxy-D-xylulose 5-phosphate = pyridoxine 5'-phosphate + phosphate + 2 H2O + H(+). It functions in the pathway cofactor biosynthesis; pyridoxine 5'-phosphate biosynthesis; pyridoxine 5'-phosphate from D-erythrose 4-phosphate: step 5/5. In terms of biological role, catalyzes the complicated ring closure reaction between the two acyclic compounds 1-deoxy-D-xylulose-5-phosphate (DXP) and 3-amino-2-oxopropyl phosphate (1-amino-acetone-3-phosphate or AAP) to form pyridoxine 5'-phosphate (PNP) and inorganic phosphate. This chain is Pyridoxine 5'-phosphate synthase, found in Anaplasma phagocytophilum (strain HZ).